Here is an 84-residue protein sequence, read N- to C-terminus: NADH dehydrogenase [ubiquinone] 1 alpha subcomplex subunit 3 (84 aa).

Position 2 is an N-acetylalanine (A2). Residues 19-39 form a helical membrane-spanning segment; the sequence is LVVSFVVGGLAVILPPLSPYF. A disordered region spans residues 56–84; it reads PVRDDGNMPDVPSHPQDPQGPSLEWLKKL.

Belongs to the complex I NDUFA3 subunit family. In terms of assembly, complex I is composed of 45 different subunits.

The protein resides in the mitochondrion inner membrane. Its function is as follows. Accessory subunit of the mitochondrial membrane respiratory chain NADH dehydrogenase (Complex I), that is believed not to be involved in catalysis. Complex I functions in the transfer of electrons from NADH to the respiratory chain. The immediate electron acceptor for the enzyme is believed to be ubiquinone. In Homo sapiens (Human), this protein is NADH dehydrogenase [ubiquinone] 1 alpha subcomplex subunit 3 (NDUFA3).